Reading from the N-terminus, the 948-residue chain is Bifunctional glutamine synthetase adenylyltransferase/adenylyl-removing enzyme (948 aa).

Residues 1 to 444 (MSLPSALLPT…VFATLIGEED (444 aa)) are adenylyl removase. Residues 452 to 948 (ARHFHELWDM…VIQAWQQWLG (497 aa)) form an adenylyl transferase region.

The protein belongs to the GlnE family. It depends on Mg(2+) as a cofactor.

The catalysed reaction is [glutamine synthetase]-O(4)-(5'-adenylyl)-L-tyrosine + phosphate = [glutamine synthetase]-L-tyrosine + ADP. It carries out the reaction [glutamine synthetase]-L-tyrosine + ATP = [glutamine synthetase]-O(4)-(5'-adenylyl)-L-tyrosine + diphosphate. Functionally, involved in the regulation of glutamine synthetase GlnA, a key enzyme in the process to assimilate ammonia. When cellular nitrogen levels are high, the C-terminal adenylyl transferase (AT) inactivates GlnA by covalent transfer of an adenylyl group from ATP to specific tyrosine residue of GlnA, thus reducing its activity. Conversely, when nitrogen levels are low, the N-terminal adenylyl removase (AR) activates GlnA by removing the adenylyl group by phosphorolysis, increasing its activity. The regulatory region of GlnE binds the signal transduction protein PII (GlnB) which indicates the nitrogen status of the cell. In Vibrio cholerae serotype O1 (strain ATCC 39315 / El Tor Inaba N16961), this protein is Bifunctional glutamine synthetase adenylyltransferase/adenylyl-removing enzyme.